Consider the following 404-residue polypeptide: MSQSRYFFTSESVSEGHPDKVSDQISDAVLDEFLRQDPNSRVACETFVTTGQVIVGGEVTTKGIVDIQKIARRVVTEIGYTKGEYMFEANSCGVLSALHSQSPDINRGVDRKEEIADEFDRVGAGDQGMMFGYACTETPELMPAAIQFAQQLVKKLAEIRKEGKIMTYLRPDAKSQVTLEYIDDKVARVDAVVVSTQHDPEPAGMSEADFQAVIRKDIIENVVKVVIPAELLDENTKFHINPTGRFEIGGPHGDTGLTGRKIIVDTYGGAAPHGGGAFSGKDPSKVDRSAAYASRHVAKNIVAADLADKCTVQVSYAIGVARPVSIYIDTHGTAKHGLDDAEIQAKAEKIFDLRPAAIIRRFNLDRPHGWCYQDTAAYGHFGRDIFPWEKTDKVEELKKAFNLA.

The span at 1–13 shows a compositional bias: polar residues; it reads MSQSRYFFTSESV. Residues 1–20 form a disordered region; the sequence is MSQSRYFFTSESVSEGHPDK. H17 is a binding site for ATP. Residue D19 coordinates Mg(2+). K(+) is bound at residue E45. L-methionine is bound by residues E58 and Q101. A flexible loop region spans residues 101 to 111; that stretch reads QSPDINRGVDR. ATP-binding positions include 172–174, 245–246, D254, 260–261, A277, and K281; these read DAK, RF, and RK. D254 provides a ligand contact to L-methionine. Residue K285 coordinates L-methionine.

The protein belongs to the AdoMet synthase family. In terms of assembly, homotetramer; dimer of dimers. It depends on Mg(2+) as a cofactor. K(+) is required as a cofactor.

The protein localises to the cytoplasm. It catalyses the reaction L-methionine + ATP + H2O = S-adenosyl-L-methionine + phosphate + diphosphate. Its pathway is amino-acid biosynthesis; S-adenosyl-L-methionine biosynthesis; S-adenosyl-L-methionine from L-methionine: step 1/1. Catalyzes the formation of S-adenosylmethionine (AdoMet) from methionine and ATP. The overall synthetic reaction is composed of two sequential steps, AdoMet formation and the subsequent tripolyphosphate hydrolysis which occurs prior to release of AdoMet from the enzyme. This is S-adenosylmethionine synthase from Chlorobium limicola (strain DSM 245 / NBRC 103803 / 6330).